The following is a 533-amino-acid chain: Putative phosphate permease jhp_1384 (533 aa).

The next 12 helical transmembrane spans lie at 23 to 43, 47 to 67, 81 to 101, 129 to 149, 156 to 176, 182 to 202, 221 to 241, 248 to 268, 286 to 306, 338 to 358, 372 to 392, and 509 to 529; these read IALA…FGQA, GLLL…IGAN, AISM…GAII, VMLA…LIGA, SVVG…AINW, IVAS…FFLM, VVPY…IVKV, VGFE…FILF, VNEL…FAHG, VPLW…SLYG, LDKM…LLAS, and LVTV…LGFI.

The protein belongs to the inorganic phosphate transporter (PiT) (TC 2.A.20) family.

It is found in the cell membrane. In terms of biological role, potential transporter for phosphate. This is Putative phosphate permease jhp_1384 from Helicobacter pylori (strain J99 / ATCC 700824) (Campylobacter pylori J99).